Here is a 571-residue protein sequence, read N- to C-terminus: MSSQVLASSQKNDKTQNIIRPTTKFHPPIWGDRFLHYNISEQELEYKEGQVEELKEVVRKEIFHGNNKRNIINVSKQLKLIDDVERLGLSYHFESEIEKKLQHIYEITTNNIDHQDQHYYYSNHDEDLHDVSIRFRLLRQHGFNISSNIFEKFKDESGKFKESLKSDIEGMLSLYEASYLSYVEENILDEALAFTTTNLKLVANKKEHPLSHEISLALYRPLRKTLVRLYARHYISIYEKQPSHNKVLLQFAKLDFNLLQSLHKKELSEISRWWKELDLANKLPFARNRIVELYLWILGVFHEPQFSLARKILIKAISMASVADDIYDAYGTFEELELLTEAILRWDISFIDKLSPDYLKTYYKVFLNSYEECEKDLKKEERYKLHYAKESMKKLIQAYFHEAQWLNQGHFPSFDEHLKVSFVSSGYPMLIETSFVGMQDVKTNQVFEWLSTQPKIFRACTIISRFMDDLVSRKFEQERNHVPSTVDCYMKQYGVSEQEACDELNKQVVNLWKEINQEFLRPTSMPSSILVRILNFTKVLDIIYKEGDGYTHVGKLVKDSVAALLIDPIPL.

The (2E,6E)-farnesyl diphosphate site is built by R287, D324, D328, R465, and D468. D324 and D328 together coordinate Mg(2+). Residues 324 to 328 carry the DDXXD motif motif; it reads DDIYD. Residues D468, S472, and E476 each coordinate Mg(2+).

It belongs to the terpene synthase family. Tpsb subfamily. It depends on Mg(2+) as a cofactor. Mn(2+) is required as a cofactor. In terms of tissue distribution, highly expressed in glandular trichomes.

The catalysed reaction is (2E,6E)-farnesyl diphosphate = (1E,4E)-germacrene B + diphosphate. Its pathway is secondary metabolite biosynthesis; terpenoid biosynthesis. Its function is as follows. Involved in sesquiterpene olefins biosynthesis, constituants of cannabinoids and terpenoids-rich resins. Catalyzes mainly the conversion of (2E)-farnesyl diphosphate to germacrene B, which is spontaneously converted to gamma-elemene as a thermal degradation product. This chain is Germacrene B synthase TPS16CC, found in Cannabis sativa (Hemp).